The chain runs to 447 residues: MQHFEVNYDGLVGPTHNYAGLSFGNVASLANAKATSSPKHAALQGLKKMKALHDMGMKQGVLAPQERPDIFALRRLGFHGTDSEVLYRAATEAPAIFQAVCSASSMWTANAATVSPSADTANGKVHFTPANLTNKFHRSLEPQTSGRILQAMFNNGRYFEHHTHLPDNEHFGDEGAANHTRLCREYGHAGIELFVFGRYAFDSSKPAPKRFPARQTLEASQAIARLHGLSEDNTVYIQQNPDVIDQGVFHNDVIAVGNQNVLFYHEQAFTDTESKLAEIQRKFGEHPLHFIKVATEQVSIQDAVNTYLFNTQLITPPDGQMTIIAPTECQENDNVRSYLEQLTQSADSPIKRVEYFDVKQSMRNGGGPACLRLRVALNDEEIAGANQNCLMSDGLFNRLNQWVEKHYRDELAVDDLRDPALLEESRTALDELTQIMKLGSVYPFQQD.

Substrate contacts are provided by residues 19–28, asparagine 110, and 137–138; these read AGLSFGNVAS and HR. Glutamate 174 is an active-site residue. Arginine 214 is a binding site for substrate. Histidine 250 is a catalytic residue. Aspartate 252 and asparagine 364 together coordinate substrate. Cysteine 370 acts as the Nucleophile in catalysis.

The protein belongs to the succinylarginine dihydrolase family. In terms of assembly, homodimer.

The catalysed reaction is N(2)-succinyl-L-arginine + 2 H2O + 2 H(+) = N(2)-succinyl-L-ornithine + 2 NH4(+) + CO2. Its pathway is amino-acid degradation; L-arginine degradation via AST pathway; L-glutamate and succinate from L-arginine: step 2/5. Its function is as follows. Catalyzes the hydrolysis of N(2)-succinylarginine into N(2)-succinylornithine, ammonia and CO(2). In Idiomarina loihiensis (strain ATCC BAA-735 / DSM 15497 / L2-TR), this protein is N-succinylarginine dihydrolase.